The primary structure comprises 315 residues: Methionyl-tRNA formyltransferase (315 aa).

113-116 (SLLP) lines the (6S)-5,6,7,8-tetrahydrofolate pocket.

Belongs to the Fmt family.

The catalysed reaction is L-methionyl-tRNA(fMet) + (6R)-10-formyltetrahydrofolate = N-formyl-L-methionyl-tRNA(fMet) + (6S)-5,6,7,8-tetrahydrofolate + H(+). Functionally, attaches a formyl group to the free amino group of methionyl-tRNA(fMet). The formyl group appears to play a dual role in the initiator identity of N-formylmethionyl-tRNA by promoting its recognition by IF2 and preventing the misappropriation of this tRNA by the elongation apparatus. This is Methionyl-tRNA formyltransferase from Shigella boydii serotype 4 (strain Sb227).